The sequence spans 139 residues: Peptide methionine sulfoxide reductase B4 (139 aa).

A2 carries the N-acetylalanine modification. The MsrB domain maps to 12-133 (EEEWRAVLSP…NSVSINFNPA (122 aa)). Residues C51, C54, C97, and C100 each contribute to the Zn(2+) site. C69 and C122 are joined by a disulfide. C122 (nucleophile) is an active-site residue.

The protein belongs to the MsrB Met sulfoxide reductase family. It depends on Zn(2+) as a cofactor.

The protein localises to the cytoplasm. The protein resides in the cytosol. It carries out the reaction L-methionyl-[protein] + [thioredoxin]-disulfide + H2O = L-methionyl-(R)-S-oxide-[protein] + [thioredoxin]-dithiol. In terms of biological role, catalyzes the reduction of methionine sulfoxide (MetSO) to methionine in proteins. Plays a protective role against oxidative stress by restoring activity to proteins that have been inactivated by methionine oxidation. MSRB family specifically reduces the MetSO R-enantiomer. The chain is Peptide methionine sulfoxide reductase B4 (MSRB4) from Arabidopsis thaliana (Mouse-ear cress).